The following is a 543-amino-acid chain: Periplasmic oligopeptide-binding protein OppA (543 aa).

Residues 1-26 (MTNITKRSLVAAGVLAALMAGNVALA) form the signal peptide. Residues cysteine 297 and cysteine 443 are joined by a disulfide bond.

Belongs to the bacterial solute-binding protein 5 family. As to quaternary structure, the complex is composed of two ATP-binding proteins (OppD and OppF), two transmembrane proteins (OppB and OppC) and a solute-binding protein (OppA).

The protein resides in the periplasm. Its function is as follows. Part of the ABC transporter complex OppABCDF involved in the uptake of oligopeptides. Plays an important nutritional role. Binds peptides containing from two to five amino acid residues. Displays a preference for tripeptides and tetrapeptides over dipeptides and pentapeptides, for peptides composed of L-amino acids and for positively charged peptides. Cannot bind the cell wall peptide L-Ala-D-Gly-gamma-meso-diaminopimelic acid. The protein is Periplasmic oligopeptide-binding protein OppA of Escherichia coli (strain K12).